A 53-amino-acid polypeptide reads, in one-letter code: Large ribosomal subunit protein eL40 (53 aa).

This sequence belongs to the eukaryotic ribosomal protein eL40 family.

The polypeptide is Large ribosomal subunit protein eL40 (Pyrobaculum calidifontis (strain DSM 21063 / JCM 11548 / VA1)).